The following is a 96-amino-acid chain: Large ribosomal subunit protein uL23 (96 aa).

Belongs to the universal ribosomal protein uL23 family. Part of the 50S ribosomal subunit. Contacts protein L29, and trigger factor when it is bound to the ribosome.

In terms of biological role, one of the early assembly proteins it binds 23S rRNA. One of the proteins that surrounds the polypeptide exit tunnel on the outside of the ribosome. Forms the main docking site for trigger factor binding to the ribosome. This chain is Large ribosomal subunit protein uL23, found in Clostridium novyi (strain NT).